The primary structure comprises 116 residues: CDKN2AIP N-terminal-like protein (116 aa).

Residue Met1 is modified to N-acetylmethionine. Positions 24–116 (AEQFRSYSES…RSELMKKHQS (93 aa)) constitute an XRN2-binding (XTBD) domain.

Belongs to the CARF family. Interacts with XRN2; the interaction is direct.

This chain is CDKN2AIP N-terminal-like protein (CDKN2AIPNL), found in Homo sapiens (Human).